Here is a 688-residue protein sequence, read N- to C-terminus: Methionine--tRNA ligase (688 aa).

The short motif at 15-25 is the 'HIGH' region element; sequence PYANGPIHLGH. 4 residues coordinate Zn(2+): Cys-146, Cys-149, Cys-159, and Cys-162. Residues 332–336 carry the 'KMSKS' region motif; that stretch reads KMSKS. Residue Lys-335 coordinates ATP. A disordered region spans residues 552-576; it reads AEAPKKADSKKATDTPVDTRPPLES. Over residues 554-564 the composition is skewed to basic and acidic residues; it reads APKKADSKKAT. Positions 587–688 constitute a tRNA-binding domain; that stretch reads DFAKIDLRIA…EGAQPGMRVK (102 aa).

The protein belongs to the class-I aminoacyl-tRNA synthetase family. MetG type 1 subfamily. Homodimer. The cofactor is Zn(2+).

It is found in the cytoplasm. The enzyme catalyses tRNA(Met) + L-methionine + ATP = L-methionyl-tRNA(Met) + AMP + diphosphate. Its function is as follows. Is required not only for elongation of protein synthesis but also for the initiation of all mRNA translation through initiator tRNA(fMet) aminoacylation. The sequence is that of Methionine--tRNA ligase from Shewanella woodyi (strain ATCC 51908 / MS32).